The following is a 152-amino-acid chain: Arginine repressor (152 aa).

The protein belongs to the ArgR family.

The protein localises to the cytoplasm. Its pathway is amino-acid biosynthesis; L-arginine biosynthesis [regulation]. Regulates arginine biosynthesis genes. The polypeptide is Arginine repressor (Lactococcus lactis subsp. cremoris (strain MG1363)).